The sequence spans 524 residues: Solute carrier family 40 member 1 (524 aa).

Residues 1-18 (MENETELRVVHQEEQQRE) are compositionally biased toward basic and acidic residues. The interval 1-30 (MENETELRVVHQEEQQREEGEDESQPQNPP) is disordered. A run of 11 helical transmembrane segments spans residues 70-92 (SLLL…GPIV), 109-129 (LLFQ…LLLV), 137-157 (LPVF…GVLS), 191-211 (GIDL…ISFV), 218-238 (ITFA…FISV), 314-334 (VVLP…FGTL), 347-367 (YIIG…TLVY), 380-400 (GLWS…SIWV), 409-429 (MLMA…LAVI), 446-466 (GVQN…GIIV), and 472-492 (FWIL…LYTI).

This sequence belongs to the ferroportin (FP) (TC 2.A.100) family. SLC40A subfamily.

The protein localises to the membrane. Its function is as follows. May be involved in iron transport and iron homeostasis. This is Solute carrier family 40 member 1 (IREG1) from Arabidopsis thaliana (Mouse-ear cress).